The following is a 319-amino-acid chain: Thioredoxin reductase (319 aa).

Residues 11–14 (SGPA), 40–41 (VA), Q45, N54, V87, C145, D288, and 295–297 (RQA) contribute to the FAD site. C142 and C145 form a disulfide bridge.

This sequence belongs to the class-II pyridine nucleotide-disulfide oxidoreductase family. As to quaternary structure, homodimer. FAD is required as a cofactor.

The protein resides in the cytoplasm. It catalyses the reaction [thioredoxin]-dithiol + NADP(+) = [thioredoxin]-disulfide + NADPH + H(+). This Eremothecium gossypii (strain ATCC 10895 / CBS 109.51 / FGSC 9923 / NRRL Y-1056) (Yeast) protein is Thioredoxin reductase (TRR1).